The primary structure comprises 199 residues: Thymidine kinase (199 aa).

Residues 9–16 (GAMSSGKS) and 93–96 (DEAQ) contribute to the ATP site. The active-site Proton acceptor is Glu94. Zn(2+) is bound by residues Cys151, Cys154, Cys188, and His191.

This sequence belongs to the thymidine kinase family. Homotetramer.

It is found in the cytoplasm. It catalyses the reaction thymidine + ATP = dTMP + ADP + H(+). This Lactobacillus johnsonii (strain CNCM I-12250 / La1 / NCC 533) protein is Thymidine kinase.